The sequence spans 486 residues: ATP synthase subunit beta (486 aa).

170-177 (GGAGVGKT) lines the ATP pocket.

The protein belongs to the ATPase alpha/beta chains family. In terms of assembly, F-type ATPases have 2 components, CF(1) - the catalytic core - and CF(0) - the membrane proton channel. CF(1) has five subunits: alpha(3), beta(3), gamma(1), delta(1), epsilon(1). CF(0) has three main subunits: a(1), b(2) and c(9-12). The alpha and beta chains form an alternating ring which encloses part of the gamma chain. CF(1) is attached to CF(0) by a central stalk formed by the gamma and epsilon chains, while a peripheral stalk is formed by the delta and b chains.

The protein resides in the cell membrane. It catalyses the reaction ATP + H2O + 4 H(+)(in) = ADP + phosphate + 5 H(+)(out). Produces ATP from ADP in the presence of a proton gradient across the membrane. The catalytic sites are hosted primarily by the beta subunits. In Clavibacter sepedonicus (Clavibacter michiganensis subsp. sepedonicus), this protein is ATP synthase subunit beta.